A 245-amino-acid chain; its full sequence is Terpene cyclase ausL (245 aa).

7 helical membrane-spanning segments follow: residues 17-37 (ILAISEVLKVVAAVGWSVNYI), 51-71 (IGILPLCCDIGWEFVYAWMFP), 76-96 (HWQGVVRVWFFLHSAVLLVTL), 113-133 (IVFIYIFVTIVFGAGQYALAA), 138-158 (ALGFHWGGALCQFLSSSGGIA), 170-190 (SYLIWFARAISTFAGFIKLCI), and 206-226 (MCWFYIVTVLSFDAAYPFLYF).

Belongs to the paxB family.

It is found in the membrane. Its pathway is secondary metabolite biosynthesis; terpenoid biosynthesis. In terms of biological role, terpene cyclase; part of the gene cluster A that mediates the biosynthesis of the fungal meroterpenoid acetoxydehydroaustin. The first step of the pathway is the synthesis of 3,5-dimethylorsellinic acid by the polyketide synthase ausA. 3,5-dimethylorsellinic acid is then prenylated by the polyprenyl transferase ausN. Further epoxidation by the FAD-dependent monooxygenase ausM and cyclization by the probable terpene cyclase ausL lead to the formation of protoaustinoid A. Protoaustinoid A is then oxidized to spiro-lactone preaustinoid A3 by the combined action of the FAD-binding monooxygenases ausB and ausC, and the dioxygenase ausE. Acid-catalyzed keto-rearrangement and ring contraction of the tetraketide portion of preaustinoid A3 by ausJ lead to the formation of preaustinoid A4. The aldo-keto reductase ausK, with the help of ausH, is involved in the next step by transforming preaustinoid A4 into isoaustinone which is in turn hydroxylated by the P450 monooxygenase ausI to form austinolide. The cytochrome P450 monooxygenase ausG then modifies austinolide to austinol. Austinol is further acetylated to austin by the O-acetyltransferase ausP, which spontaneously changes to dehydroaustin. The cytochrome P450 monooxygenase then converts dehydroaustin is into 7-dehydrodehydroaustin. The hydroxylation catalyzed by ausR permits the second O-acetyltransferase ausQ to add an additional acetyl group to the molecule, leading to the formation of acetoxydehydroaustin. Due to genetic rearrangements of the clusters and the subsequent loss of some enzymes, the end product of the Penicillium brasilianum austinoid biosynthesis clusters is acetoxydehydroaustin. This chain is Terpene cyclase ausL, found in Penicillium brasilianum.